We begin with the raw amino-acid sequence, 351 residues long: Bifunctional UDP-glucose 4-epimerase and UDP-xylose 4-epimerase 3 (351 aa).

An NAD(+)-binding site is contributed by 8 to 39 (NILVTGGAGFIGTHTVVQLLNQGFKVTIIDNL). Ser134 lines the substrate pocket. The Proton acceptor role is filled by Tyr158.

The protein belongs to the NAD(P)-dependent epimerase/dehydratase family. As to quaternary structure, homodimer. Heterodimer. Requires NAD(+) as cofactor. Ubiquitous.

It catalyses the reaction UDP-alpha-D-glucose = UDP-alpha-D-galactose. The catalysed reaction is UDP-beta-L-arabinopyranose = UDP-alpha-D-xylose. It functions in the pathway carbohydrate metabolism; galactose metabolism. The protein operates within nucleotide-sugar biosynthesis; UDP-L-arabinose biosynthesis; UDP-L-arabinose from UDP-alpha-D-xylose: step 1/1. Its pathway is cell wall biogenesis; cell wall polysaccharide biosynthesis. Strongly inhibited by UDP. Its function is as follows. Catalyzes the interconversion between UDP-glucose and UDP-galactose and the interconversion between UDP-arabinose and UDP-xylose. Cooperates with UGE2 in pollen development. May preferentially act in the UDP-galactose to UDP-glucose direction, therefore displaying a role in carbohydrate catabolism. The sequence is that of Bifunctional UDP-glucose 4-epimerase and UDP-xylose 4-epimerase 3 (UGE3) from Arabidopsis thaliana (Mouse-ear cress).